We begin with the raw amino-acid sequence, 204 residues long: Spermatogenesis-associated protein 46 (204 aa).

The tract at residues 101-120 (SSSSQENTYPREANRKSKHG) is disordered.

Testis-specific.

It is found in the nucleus membrane. Plays a role in spermiogenesis and fertilization. This Mus musculus (Mouse) protein is Spermatogenesis-associated protein 46 (Spata46).